The primary structure comprises 367 residues: Anhydro-N-acetylmuramic acid kinase (367 aa).

An ATP-binding site is contributed by 11–18 (GTSLDGVD).

The protein belongs to the anhydro-N-acetylmuramic acid kinase family.

It catalyses the reaction 1,6-anhydro-N-acetyl-beta-muramate + ATP + H2O = N-acetyl-D-muramate 6-phosphate + ADP + H(+). It functions in the pathway amino-sugar metabolism; 1,6-anhydro-N-acetylmuramate degradation. Its pathway is cell wall biogenesis; peptidoglycan recycling. In terms of biological role, catalyzes the specific phosphorylation of 1,6-anhydro-N-acetylmuramic acid (anhMurNAc) with the simultaneous cleavage of the 1,6-anhydro ring, generating MurNAc-6-P. Is required for the utilization of anhMurNAc either imported from the medium or derived from its own cell wall murein, and thus plays a role in cell wall recycling. This Rhodopseudomonas palustris (strain ATCC BAA-98 / CGA009) protein is Anhydro-N-acetylmuramic acid kinase.